The chain runs to 259 residues: 5'-nucleotidase SurE (259 aa).

4 residues coordinate a divalent metal cation: aspartate 8, aspartate 9, serine 39, and asparagine 95.

Belongs to the SurE nucleotidase family. A divalent metal cation serves as cofactor.

Its subcellular location is the cytoplasm. It carries out the reaction a ribonucleoside 5'-phosphate + H2O = a ribonucleoside + phosphate. Functionally, nucleotidase that shows phosphatase activity on nucleoside 5'-monophosphates. The polypeptide is 5'-nucleotidase SurE (Pseudothermotoga lettingae (strain ATCC BAA-301 / DSM 14385 / NBRC 107922 / TMO) (Thermotoga lettingae)).